The following is a 187-amino-acid chain: UPF0301 protein VP2612 (187 aa).

Belongs to the UPF0301 (AlgH) family.

The protein is UPF0301 protein VP2612 of Vibrio parahaemolyticus serotype O3:K6 (strain RIMD 2210633).